The primary structure comprises 320 residues: Pseudouridine-5'-phosphate glycosidase (320 aa).

Glu-25 acts as the Proton donor in catalysis. Substrate is bound by residues Lys-85 and Val-105. Asp-137 contacts Mn(2+). 139 to 141 (SAD) contributes to the substrate binding site. Lys-158 (nucleophile) is an active-site residue.

This sequence belongs to the pseudouridine-5'-phosphate glycosidase family. In terms of assembly, homotrimer. The cofactor is Mn(2+).

The enzyme catalyses D-ribose 5-phosphate + uracil = psi-UMP + H2O. In terms of biological role, catalyzes the reversible cleavage of pseudouridine 5'-phosphate (PsiMP) to ribose 5-phosphate and uracil. Functions biologically in the cleavage direction, as part of a pseudouridine degradation pathway. The sequence is that of Pseudouridine-5'-phosphate glycosidase from Rhodospirillum centenum (strain ATCC 51521 / SW).